A 505-amino-acid chain; its full sequence is Aspartyl/glutamyl-tRNA(Asn/Gln) amidotransferase subunit B (505 aa).

Belongs to the GatB/GatE family. GatB subfamily. In terms of assembly, heterotrimer of A, B and C subunits.

It carries out the reaction L-glutamyl-tRNA(Gln) + L-glutamine + ATP + H2O = L-glutaminyl-tRNA(Gln) + L-glutamate + ADP + phosphate + H(+). The catalysed reaction is L-aspartyl-tRNA(Asn) + L-glutamine + ATP + H2O = L-asparaginyl-tRNA(Asn) + L-glutamate + ADP + phosphate + 2 H(+). Functionally, allows the formation of correctly charged Asn-tRNA(Asn) or Gln-tRNA(Gln) through the transamidation of misacylated Asp-tRNA(Asn) or Glu-tRNA(Gln) in organisms which lack either or both of asparaginyl-tRNA or glutaminyl-tRNA synthetases. The reaction takes place in the presence of glutamine and ATP through an activated phospho-Asp-tRNA(Asn) or phospho-Glu-tRNA(Gln). This is Aspartyl/glutamyl-tRNA(Asn/Gln) amidotransferase subunit B from Dinoroseobacter shibae (strain DSM 16493 / NCIMB 14021 / DFL 12).